The primary structure comprises 407 residues: Gonadotropin-releasing hormone receptor (407 aa).

The Extracellular portion of the chain corresponds to 1 to 36; that stretch reads MDYLNDSMFNNMTYNITSTPLPDAPRFDNVYVSKLC. N-linked (GlcNAc...) asparagine glycans are attached at residues asparagine 5, asparagine 11, and asparagine 15. A helical membrane pass occupies residues 37-57; it reads VLGTVFVISFFGNTLVIIQIF. Residues 58-69 are Cytoplasmic-facing; the sequence is RIRGSRSTIQSL. A helical transmembrane segment spans residues 70–90; sequence ILNLAIADLMVSFFNILMDII. Over 91-105 the chain is Extracellular; sequence WSATVEWLAGNTMCK. An intrachain disulfide couples cysteine 104 to cysteine 183. Residues 106–126 form a helical membrane-spanning segment; that stretch reads IMKYLTVFGLHLSTYITVSIA. The Cytoplasmic portion of the chain corresponds to 127 to 147; it reads LDRCFAILSPMSRSKAPLRVR. Residues 148-168 traverse the membrane as a helical segment; sequence IMITMAWVLSAIFSIPQAVIF. The Extracellular segment spans residues 169 to 199; the sequence is QEQRKMFRQGMFHQCRDSYNALWQKQLYSAS. A helical transmembrane segment spans residues 200 to 220; the sequence is SLILLFVIPLIIMVTSYLLIL. Over 221 to 268 the chain is Cytoplasmic; that stretch reads KTIVKTSRQFHDTPISPTSMSCYSVNHGQIRTHLFERARKRSSRMSAV. Residues 269-289 traverse the membrane as a helical segment; that stretch reads IVAAFILCWTPYYIIFLGFAF. Topologically, residues 290–298 are extracellular; sequence FQWDNSRTV. Residues 299–319 form a helical membrane-spanning segment; the sequence is IYFFTLGTSNCMLNPLIYGAF. Residues 320–407 lie on the Cytoplasmic side of the membrane; it reads TIYKVHRGRS…NGKMPTKPPG (88 aa). A disordered region spans residues 377–407; that stretch reads SLTNPHQPVRPSPGINSTTSPNGKMPTKPPG.

It belongs to the G-protein coupled receptor 1 family. As to expression, widely expressed in peripheral nervous tissue, gonadal tissue and brain. In the brain, expression is high in the palliovisceral lobe and superior buccal lobe but low in the subvertical lobe, superior and inferior frontal lobe, posterior brachial lobe and pedal lobe. Expressed in stomach, rectum, aorta, heart, salivary gland, branchia, pancreas, radula retractor muscle, branchial vessel but not in white body, esophagus, liver and kidney.

It localises to the cell membrane. Receptor for gonadotropin releasing hormone (GnRH) that mediates the action of GnRH to stimulate the secretion of the gonadotropic hormones luteinizing hormone (LH) and follicle-stimulating hormone (FSH). This receptor mediates its action by association with G-proteins that activate a phosphatidylinositol-calcium second messenger system. Ligand interaction triggers steroidogenesis in spermatozoa and follicles. Appears to be involved in contraction of the radula retractor muscle. In Octopus vulgaris (Common octopus), this protein is Gonadotropin-releasing hormone receptor.